A 396-amino-acid chain; its full sequence is Phosphoglycerate kinase (396 aa).

Residues 21–23, arginine 36, 59–62, arginine 113, and arginine 146 contribute to the substrate site; these read DLN and HLGR. ATP-binding positions include lysine 197, glutamate 319, and 345–348; that span reads GGDT.

This sequence belongs to the phosphoglycerate kinase family. As to quaternary structure, monomer.

It localises to the cytoplasm. The catalysed reaction is (2R)-3-phosphoglycerate + ATP = (2R)-3-phospho-glyceroyl phosphate + ADP. It participates in carbohydrate degradation; glycolysis; pyruvate from D-glyceraldehyde 3-phosphate: step 2/5. The polypeptide is Phosphoglycerate kinase (Legionella pneumophila (strain Lens)).